A 640-amino-acid chain; its full sequence is 1,4-alpha-glucan branching enzyme GlgB (640 aa).

Asp318 acts as the Nucleophile in catalysis. Glu371 serves as the catalytic Proton donor.

This sequence belongs to the glycosyl hydrolase 13 family. GlgB subfamily. Monomer.

The enzyme catalyses Transfers a segment of a (1-&gt;4)-alpha-D-glucan chain to a primary hydroxy group in a similar glucan chain.. It functions in the pathway glycan biosynthesis; glycogen biosynthesis. Its function is as follows. Catalyzes the formation of the alpha-1,6-glucosidic linkages in glycogen by scission of a 1,4-alpha-linked oligosaccharide from growing alpha-1,4-glucan chains and the subsequent attachment of the oligosaccharide to the alpha-1,6 position. The chain is 1,4-alpha-glucan branching enzyme GlgB from Francisella tularensis subsp. mediasiatica (strain FSC147).